A 731-amino-acid polypeptide reads, in one-letter code: Vezatin (731 aa).

2 helical membrane passes run L91–M111 and T114–I134. The stretch at V382–E414 forms a coiled coil. Disordered stretches follow at residues P570 to Q671 and Q710 to K731. Positions I577–S586 are enriched in polar residues. Basic and acidic residues predominate over residues K590–S601. Residues G658–Q671 are compositionally biased toward polar residues. Acidic residues predominate over residues F712–I721. The segment covering E722–K731 has biased composition (basic and acidic residues).

It belongs to the vezatin family. In terms of assembly, interacts with USH2A (via the cytoplasmic region); the interaction associates VEZT with the USH2 complex at the stereocilia base. Interacts with myosin MYO7A and the cadherin-catenins complex.

It is found in the cell membrane. The protein resides in the cell projection. Its subcellular location is the stereocilium membrane. It localises to the cell junction. The protein localises to the adherens junction. It is found in the nucleus. The protein resides in the cytoplasmic vesicle. Its subcellular location is the secretory vesicle. It localises to the acrosome. In terms of biological role, plays a pivotal role in the establishment of adherens junctions and their maintenance in adult life. Required for morphogenesis of the preimplantation embryo, and for the implantation process. This is Vezatin (VEZT) from Pongo abelii (Sumatran orangutan).